The chain runs to 339 residues: tRNA-dihydrouridine(20/20a) synthase (339 aa).

Residues 26 to 28 and Gln78 contribute to the FMN site; that span reads PML. The Proton donor role is filled by Cys108. Residues Lys147, His180, 220–222, and 242–243 contribute to the FMN site; these read NGG and GR.

Belongs to the Dus family. DusA subfamily. FMN serves as cofactor.

The enzyme catalyses 5,6-dihydrouridine(20) in tRNA + NADP(+) = uridine(20) in tRNA + NADPH + H(+). It carries out the reaction 5,6-dihydrouridine(20) in tRNA + NAD(+) = uridine(20) in tRNA + NADH + H(+). The catalysed reaction is 5,6-dihydrouridine(20a) in tRNA + NADP(+) = uridine(20a) in tRNA + NADPH + H(+). It catalyses the reaction 5,6-dihydrouridine(20a) in tRNA + NAD(+) = uridine(20a) in tRNA + NADH + H(+). Functionally, catalyzes the synthesis of 5,6-dihydrouridine (D), a modified base found in the D-loop of most tRNAs, via the reduction of the C5-C6 double bond in target uridines. Specifically modifies U20 and U20a in tRNAs. The chain is tRNA-dihydrouridine(20/20a) synthase from Shigella flexneri.